The chain runs to 424 residues: Inhibin beta A chain (424 aa).

Residues 1–20 (MPLLWLRGFLLASCWIIVRS) form the signal peptide. Positions 21–308 (SPTPGSEGHG…EDHPHRRRRR (288 aa)) are excised as a propeptide. Asparagine 165 is a glycosylation site (N-linked (GlcNAc...) asparagine). The segment covering 264 to 275 (EVDGDGKKKDGS) has biased composition (basic and acidic residues). The disordered stretch occupies residues 264 to 306 (EVDGDGKKKDGSDGGLEEEKEQSHRPFLMLQARQSEDHPHRRR). Cystine bridges form between cysteine 312-cysteine 320, cysteine 319-cysteine 389, cysteine 348-cysteine 421, and cysteine 352-cysteine 423.

Belongs to the TGF-beta family. Dimeric, linked by one or more disulfide bonds. Inhibin A is a dimer of alpha/INHA and beta-A/INHBA. Activin A is a homodimer of beta-A/INHBA. Activin AB is a dimer of beta-A/INHBA and beta-B/INHBB. Interacts with FST and FSTL3; these interactions prevent activin A interaction to its type II receptor. Activin A interacts with ACVR2A. Activin A interacts with BMPR2. Inhibin A interacts with ACVR1; this interaction creates a non-signaling complex (NSC) that inhibits ACVR1-mediated BMP signaling. Inhibin A interacts with ACVR2A. As to expression, uterus, ovary and liver.

It localises to the secreted. Inhibins/activins are involved in regulating a number of diverse functions such as hypothalamic and pituitary hormone secretion, gonadal hormone secretion, germ cell development and maturation, erythroid differentiation, insulin secretion, nerve cell survival, embryonic axial development or bone growth, depending on their subunit composition. In terms of biological role, activin A is a homodimer of INHBA that plays a role in several essential biological processes including embryonic development, stem cell maintenance and differentiation, haematopoiesis, cell proliferation and tissue fibrosis. Signals through type I (such as ACVR1B or ACVR1C) and type II receptors (such as ACVR2A, ACVR2B or BMPR2) which, upon ligand binding, phosphorylate SMAD2 and SMAD3 intracellular signaling mediators that form a complex with SMAD4, translocate to the nucleus and modulate gene expression. Can also activate alternative non-canonical intracellular signaling pathways including the p38 MAPK, extracellular signal-regulated kinases 1/2 (ERK1/2) and c-Jun N-terminal kinases (JNKs) to modulate cell migration and differentiation. Alternatively, promotes osteoblastic differentiation via ACVRL1-SMAD1/5/9 pathway. In addition, can engage the type I receptor ACVR1 to form an ACVR1-activin A-type II receptor non-signaling complex (NSC) that renders receptors unavailable for engagement with BMPs, hence resulting in an apparent inhibition of ACVR1-mediated BMP signaling. Its function is as follows. Inhibin A is a dimer of alpha/INHA and beta-A/INHBA that functions as a feedback regulator in the hypothalamic-pituitary-gonadal (HPG) axis. Inhibits the secretion of FSH from the anterior pituitary gland by acting on pituitary gonadotrope cells. Antagonizes activin A by binding to the proteoglycan, betaglycan, and forming a stable complex with and, thereby, sequestering type II activin receptors while excluding type I receptor. This Mus musculus (Mouse) protein is Inhibin beta A chain (Inhba).